A 397-amino-acid chain; its full sequence is 8-amino-7-oxononanoate synthase (397 aa).

A substrate-binding site is contributed by Arg24. 110 to 111 is a pyridoxal 5'-phosphate binding site; that stretch reads GY. Residue His135 participates in substrate binding. Positions 183, 211, and 240 each coordinate pyridoxal 5'-phosphate. Lys243 is subject to N6-(pyridoxal phosphate)lysine. Thr357 is a substrate binding site.

This sequence belongs to the class-II pyridoxal-phosphate-dependent aminotransferase family. BioF subfamily. In terms of assembly, homodimer. The cofactor is pyridoxal 5'-phosphate.

The catalysed reaction is 6-carboxyhexanoyl-[ACP] + L-alanine + H(+) = (8S)-8-amino-7-oxononanoate + holo-[ACP] + CO2. It functions in the pathway cofactor biosynthesis; biotin biosynthesis. Its function is as follows. Catalyzes the decarboxylative condensation of pimeloyl-[acyl-carrier protein] and L-alanine to produce 8-amino-7-oxononanoate (AON), [acyl-carrier protein], and carbon dioxide. This Hydrogenovibrio crunogenus (strain DSM 25203 / XCL-2) (Thiomicrospira crunogena) protein is 8-amino-7-oxononanoate synthase.